The primary structure comprises 449 residues: NADH-quinone oxidoreductase subunit H (449 aa).

9 helical membrane-spanning segments follow: residues 23-43, 93-113, 137-157, 176-196, 209-229, 258-280, 300-320, 332-352, and 368-388; these read WWVI…LTLF, AVYL…FSVI, VAVL…VLGG, MISY…YAGS, LWYG…MVGE, ALFF…TLFL, YWPL…FIWL, FMAF…VAVA, and LLIG…IGGA. Residues 427–442 show a composition bias toward polar residues; sequence RSSPIASSMPQPSAAT. The interval 427–449 is disordered; it reads RSSPIASSMPQPSAATRSAGEEI.

Belongs to the complex I subunit 1 family. In terms of assembly, NDH-1 is composed of 14 different subunits. Subunits NuoA, H, J, K, L, M, N constitute the membrane sector of the complex.

It is found in the cell membrane. The enzyme catalyses a quinone + NADH + 5 H(+)(in) = a quinol + NAD(+) + 4 H(+)(out). Functionally, NDH-1 shuttles electrons from NADH, via FMN and iron-sulfur (Fe-S) centers, to quinones in the respiratory chain. The immediate electron acceptor for the enzyme in this species is believed to be ubiquinone. Couples the redox reaction to proton translocation (for every two electrons transferred, four hydrogen ions are translocated across the cytoplasmic membrane), and thus conserves the redox energy in a proton gradient. This subunit may bind ubiquinone. In Nocardioides sp. (strain ATCC BAA-499 / JS614), this protein is NADH-quinone oxidoreductase subunit H.